Reading from the N-terminus, the 53-residue chain is Ribulose bisphosphate carboxylase large chain (53 aa).

Positions 1–2 (MS) are excised as a propeptide. At P3 the chain carries N-acetylproline. At K14 the chain carries N6,N6,N6-trimethyllysine.

Belongs to the RuBisCO large chain family. Type I subfamily. In terms of assembly, heterohexadecamer of 8 large chains and 8 small chains.

It is found in the plastid. Its subcellular location is the chloroplast. The enzyme catalyses 2 (2R)-3-phosphoglycerate + 2 H(+) = D-ribulose 1,5-bisphosphate + CO2 + H2O. The catalysed reaction is D-ribulose 1,5-bisphosphate + O2 = 2-phosphoglycolate + (2R)-3-phosphoglycerate + 2 H(+). Its function is as follows. RuBisCO catalyzes two reactions: the carboxylation of D-ribulose 1,5-bisphosphate, the primary event in carbon dioxide fixation, as well as the oxidative fragmentation of the pentose substrate in the photorespiration process. Both reactions occur simultaneously and in competition at the same active site. This chain is Ribulose bisphosphate carboxylase large chain (rbcL), found in Malus domestica (Apple).